The following is a 274-amino-acid chain: Glycerol uptake facilitator protein (274 aa).

2 helical membrane-spanning segments follow: residues 3–23 (AFWG…GVCA) and 38–58 (IVVV…VGGI). The NPA 1 motif lies at 64 to 66 (NPA). The next 3 helical transmembrane spans lie at 82 to 102 (VPVY…IIYL), 131 to 151 (FANV…ILAI), and 164 to 184 (IVGF…GYAI). The NPA 2 motif lies at 185–187 (NPA). The helical transmembrane segment at 238 to 258 (ITSSFWIVSVILVVVLLGLYV) threads the bilayer.

It belongs to the MIP/aquaporin (TC 1.A.8) family.

Its subcellular location is the cell membrane. The catalysed reaction is glycerol(in) = glycerol(out). Its function is as follows. Mediates glycerol diffusion across the cytoplasmic membrane via a pore-type mechanism. The polypeptide is Glycerol uptake facilitator protein (glpF) (Bacillus subtilis (strain 168)).